The sequence spans 255 residues: Proteasome subunit alpha type-3 (255 aa).

Position 2 is an N-acetylserine (Ser-2). An N6-acetyllysine mark is found at Lys-57, Lys-206, and Lys-230. Phosphoserine is present on residues Ser-243 and Ser-250.

Belongs to the peptidase T1A family. As to quaternary structure, the 26S proteasome consists of a 20S proteasome core and two 19S regulatory subunits. The 20S proteasome core is a barrel-shaped complex made of 28 subunits that are arranged in four stacked rings. The two outer rings are each formed by seven alpha subunits, and the two inner rings are formed by seven beta subunits. The proteolytic activity is exerted by three beta-subunits PSMB5, PSMB6 and PSMB7. Interacts with AURKB. Interacts with CDKN1A. Interacts with MDM2 and RB1. Interacts with the C-terminus of TBXA2R isoform 2. Interacts with DNAJB2. In terms of assembly, (Microbial infection) Interacts with HIV-1 Tat protein. (Microbial infection) Interacts with hepatitis C virus (HCV) F protein. As to quaternary structure, (Microbial infection) Interacts with Epstein-Barr virus EBNA3 proteins.

The protein localises to the cytoplasm. The protein resides in the nucleus. In terms of biological role, component of the 20S core proteasome complex involved in the proteolytic degradation of most intracellular proteins. This complex plays numerous essential roles within the cell by associating with different regulatory particles. Associated with two 19S regulatory particles, forms the 26S proteasome and thus participates in the ATP-dependent degradation of ubiquitinated proteins. The 26S proteasome plays a key role in the maintenance of protein homeostasis by removing misfolded or damaged proteins that could impair cellular functions, and by removing proteins whose functions are no longer required. Associated with the PA200 or PA28, the 20S proteasome mediates ubiquitin-independent protein degradation. This type of proteolysis is required in several pathways including spermatogenesis (20S-PA200 complex) or generation of a subset of MHC class I-presented antigenic peptides (20S-PA28 complex). Binds to the C-terminus of CDKN1A and thereby mediates its degradation. Negatively regulates the membrane trafficking of the cell-surface thromboxane A2 receptor (TBXA2R) isoform 2. The polypeptide is Proteasome subunit alpha type-3 (Homo sapiens (Human)).